We begin with the raw amino-acid sequence, 677 residues long: Multicopper oxidase GIP1 (677 aa).

The N-terminal stretch at 1-23 (MLTSPRLILLLLAWVFSALVASA) is a signal peptide. 2 Plastocyanin-like domains span residues 31-150 (ITWE…IRRK) and 179-379 (LVMV…RYKG). The N-linked (GlcNAc...) asparagine glycan is linked to N76. Positions 80, 82, 130, and 132 each coordinate Cu cation. N-linked (GlcNAc...) asparagine glycosylation is found at N228, N283, N396, and N478. In terms of domain architecture, Plastocyanin-like 3 spans 469–588 (DEGLVIRTKN…AGGMAIAILD (120 aa)). Residue H503 participates in Cu cation binding. N-linked (GlcNAc...) asparagine glycosylation occurs at N520. The segment at 629–651 (PLLAVSPSGGPKKDSGETSASDS) is disordered.

This sequence belongs to the multicopper oxidase family. Might be part of an extracellular enzyme complex composed of GIP1, aurF, aurO and aurS.

Its subcellular location is the secreted. It localises to the extracellular space. Its pathway is pigment biosynthesis. Its function is as follows. Multicopper oxidase; part of the gene cluster that mediates the biosynthesis of aurofusarin, a red mycelium pigment which is acting as a mycotoxin. The first step is performed by the polyketide synthase which condenses one acetyl-CoA and 6 malonyl-CoA units to form the first intermediate, the cyclic heptaketide and yellow pigment YWA1. The C2 hydroxyl group in the pyrone ring of YWA1 is probably formed during ring closure by an aldol-type cyclization reaction. The dehydratase aurZ then acts as the first tailoring enzyme in the aurofusarin biosynthetic pathway by converting YWA1 to nor-rubrofusarin. Nor-rubrofusarin is then methylated to rubrofusarin by the O-methyltransferase aurJ. Rubrofusarin is then transported across the plasma membrane by the rubrofusarin-specific pump aurT for further enzymatic processing by the extracellular complex composed of GIP1, aurF, aurO and aurS to yield aurofusarin. This chain is Multicopper oxidase GIP1, found in Gibberella zeae (strain ATCC MYA-4620 / CBS 123657 / FGSC 9075 / NRRL 31084 / PH-1) (Wheat head blight fungus).